Here is a 139-residue protein sequence, read N- to C-terminus: NADPH-dependent 7-cyano-7-deazaguanine reductase (139 aa).

Cys34 (thioimide intermediate) is an active-site residue. Asp41 functions as the Proton donor in the catalytic mechanism. Substrate contacts are provided by residues Val56–Leu58 and His75–Glu76.

Belongs to the GTP cyclohydrolase I family. QueF type 1 subfamily.

Its subcellular location is the cytoplasm. It carries out the reaction 7-aminomethyl-7-carbaguanine + 2 NADP(+) = 7-cyano-7-deazaguanine + 2 NADPH + 3 H(+). It participates in tRNA modification; tRNA-queuosine biosynthesis. Functionally, catalyzes the NADPH-dependent reduction of 7-cyano-7-deazaguanine (preQ0) to 7-aminomethyl-7-deazaguanine (preQ1). The polypeptide is NADPH-dependent 7-cyano-7-deazaguanine reductase (Nitrosospira multiformis (strain ATCC 25196 / NCIMB 11849 / C 71)).